We begin with the raw amino-acid sequence, 548 residues long: MDDRQVQPGRVIVVTGAAGGIGRALVDIFAANGDVVVAVDLPDSGVIELGQNLGEPHLGLEVDVSREDDVVALRALLEKRFSRIEVLVNNAGIGPTMAATADTALEDFQRALAINLVGAYSVACETAKLMKPGAAIVNVASLAGLLGNPKRSAYAASKAGLISITKSLACRWASRGIRVTAVAPGHVRTPMVAELERAGKLDVSAIRRRVPLGRIARPDEIARAVRFLASAQASYITGSTLVVDGGWMSVNQPGGAHQAQDRTPGAEFMRPVEDTDARTVIVMGGATGVGAAIARRFAENGDTVVIADGDGEEAVKLAGLLGDKHLSRRVDRTVETEVVSLFEELRERFGHLDVFVNGMNEILVPNTEESPEVLKRILDVNLTGAFTCVREAAISMRSGSVILNLGASLSLSPLAPSHAYGAYNAGIDMLTRCTAAELGPLGIRTATVAPGYIRTCAANRLAAVAGMDSASLRQRIPLGRVGDAEEVAEAAYFLASFDASYINGSILHVDGGLISSREAGWGSEVDGAISAEMRPQRRPAARWRLLSP.

Short-chain dehydrogenase/reductase stretches follow at residues Met-1–Val-250 and Pro-271–Pro-548. Residue Ile-12–Val-37 coordinates NADP(+). Ser-141 lines the substrate pocket. Tyr-154 acts as the Proton acceptor in catalysis. Val-280–Val-304 lines the NADP(+) pocket. The Proton acceptor role is filled by Tyr-420.

Belongs to the short-chain dehydrogenases/reductases (SDR) family.

This is an uncharacterized protein from Sinorhizobium fredii (strain NBRC 101917 / NGR234).